The following is a 316-amino-acid chain: Transaldolase (316 aa).

The active-site Schiff-base intermediate with substrate is lysine 132.

This sequence belongs to the transaldolase family. Type 1 subfamily. Homodimer.

It is found in the cytoplasm. It carries out the reaction D-sedoheptulose 7-phosphate + D-glyceraldehyde 3-phosphate = D-erythrose 4-phosphate + beta-D-fructose 6-phosphate. Its pathway is carbohydrate degradation; pentose phosphate pathway; D-glyceraldehyde 3-phosphate and beta-D-fructose 6-phosphate from D-ribose 5-phosphate and D-xylulose 5-phosphate (non-oxidative stage): step 2/3. Functionally, transaldolase is important for the balance of metabolites in the pentose-phosphate pathway. The chain is Transaldolase from Vibrio vulnificus (strain YJ016).